Reading from the N-terminus, the 678-residue chain is Auxin response factor 7 (678 aa).

Positions 128 to 230 form a DNA-binding region, TF-B3; the sequence is FCKTLTASDT…ELRVGVRRLM (103 aa). Disordered stretches follow at residues 360–386 and 502–547; these read AVSN…NSIA and GVGQ…SRQV. The PB1 domain maps to 548 to 641; the sequence is RSCTKVIMQG…EAKQLTPKSK (94 aa). The tract at residues 643–678 is disordered; it reads PIIGDAIKPNPNKQSPESDMPHSDLDSTAPVTDKDC.

It belongs to the ARF family. In terms of assembly, homodimers and heterodimers. In terms of tissue distribution, expressed in roots, culms, leaves and young panicles.

It is found in the nucleus. Auxin response factors (ARFs) are transcriptional factors that bind specifically to the DNA sequence 5'-TGTCTC-3' found in the auxin-responsive promoter elements (AuxREs). This Oryza sativa subsp. japonica (Rice) protein is Auxin response factor 7 (ARF7).